The primary structure comprises 564 residues: Isocitrate dehydrogenase kinase/phosphatase (564 aa).

Residues 315–321 and K336 contribute to the ATP site; that span reads APGVKGM. D371 is a catalytic residue.

Belongs to the AceK family.

It is found in the cytoplasm. It carries out the reaction L-seryl-[isocitrate dehydrogenase] + ATP = O-phospho-L-seryl-[isocitrate dehydrogenase] + ADP + H(+). In terms of biological role, bifunctional enzyme which can phosphorylate or dephosphorylate isocitrate dehydrogenase (IDH) on a specific serine residue. This is a regulatory mechanism which enables bacteria to bypass the Krebs cycle via the glyoxylate shunt in response to the source of carbon. When bacteria are grown on glucose, IDH is fully active and unphosphorylated, but when grown on acetate or ethanol, the activity of IDH declines drastically concomitant with its phosphorylation. The sequence is that of Isocitrate dehydrogenase kinase/phosphatase from Idiomarina loihiensis (strain ATCC BAA-735 / DSM 15497 / L2-TR).